Reading from the N-terminus, the 378-residue chain is Succinyl-diaminopimelate desuccinylase (378 aa).

His77 lines the Zn(2+) pocket. The active site involves Asp79. Residue Asp108 coordinates Zn(2+). Catalysis depends on Glu138, which acts as the Proton acceptor. Zn(2+)-binding residues include Glu139, Glu167, and His350.

It belongs to the peptidase M20A family. DapE subfamily. In terms of assembly, homodimer. Zn(2+) serves as cofactor. Co(2+) is required as a cofactor.

The catalysed reaction is N-succinyl-(2S,6S)-2,6-diaminopimelate + H2O = (2S,6S)-2,6-diaminopimelate + succinate. It participates in amino-acid biosynthesis; L-lysine biosynthesis via DAP pathway; LL-2,6-diaminopimelate from (S)-tetrahydrodipicolinate (succinylase route): step 3/3. Its function is as follows. Catalyzes the hydrolysis of N-succinyl-L,L-diaminopimelic acid (SDAP), forming succinate and LL-2,6-diaminopimelate (DAP), an intermediate involved in the bacterial biosynthesis of lysine and meso-diaminopimelic acid, an essential component of bacterial cell walls. The protein is Succinyl-diaminopimelate desuccinylase of Erythrobacter litoralis (strain HTCC2594).